The following is a 1675-amino-acid chain: Clathrin heavy chain 1 (1675 aa).

Residue Ala-2 is modified to N-acetylalanine. Residues 2–479 (AQILPIRFQE…VDPTLALSVY (478 aa)) form a globular terminal domain region. WD40-like repeat regions lie at residues 24 to 67 (NIGF…RPIS), 68 to 107 (ADSAIMNPASKVIALKAGKTLQIFNIEMKSKMKAHTMTDD), 108 to 149 (VTFW…SSLA), 150 to 195 (GCQI…QPIE), 196 to 257 (GHAA…PEAQ), 258 to 301 (NDFP…ISGE), and 302 to 330 (TIFVTAPHEATAGIIGVNRKGQVLSVCVE). Phosphoserine is present on Ser-67. Thr-105 is subject to Phosphothreonine. Position 184 is a phosphotyrosine (Tyr-184). Thr-394 carries the phosphothreonine modification. A binding site for the uncoating ATPase, involved in lattice disassembly region spans residues 449 to 465 (EKWLKEDKLECSEELGD). The tract at residues 480–523 (LRANVPNKVIQCFAETGQVQKIVLYAKKVGYTPDWIFLLRNVMR) is flexible linker. The tract at residues 524-634 (ISPDQGQQFA…RALEHFTDLY (111 aa)) is distal segment. Residues 524–1675 (ISPDQGQQFA…QPQPGFGYSM (1152 aa)) are heavy chain arm. CHCR repeat units lie at residues 537–683 (VQDE…QIWV), 686–828 (ASKY…SEDV), 833–972 (ILVV…PLID), 979–1124 (LSET…VKEA), 1128–1269 (YIKA…FRLA), 1274–1420 (LHIV…LLLN), and 1423–1566 (LMVL…RECF). A Phosphotyrosine modification is found at Tyr-634. The interval 639–1675 (AVVHTHLLNP…QPQPGFGYSM (1037 aa)) is proximal segment. At Lys-737 the chain carries N6-succinyllysine. Lys-856 is modified (N6-acetyllysine). Tyr-899 carries the phosphotyrosine modification. Ser-1167 carries the phosphoserine modification. Tyr-1206 is modified (phosphotyrosine). The involved in binding clathrin light chain stretch occupies residues 1213–1522 (AAKLLYNNVS…YLFKGNNRWK (310 aa)). A Phosphoserine modification is found at Ser-1229. N6-acetyllysine; alternate is present on Lys-1441. Residue Lys-1441 is modified to N6-succinyllysine; alternate. Phosphotyrosine occurs at positions 1477 and 1487. Ser-1494 is subject to Phosphoserine. Lys-1501 carries the post-translational modification N6-acetyllysine. The segment at 1550–1675 (AEELLQWFLQ…QPQPGFGYSM (126 aa)) is trimerization.

The protein belongs to the clathrin heavy chain family. As to quaternary structure, clathrin triskelions, composed of 3 heavy chains and 3 light chains, are the basic subunits of the clathrin coat. In the presence of light chains, hub assembly is influenced by both the pH and the concentration of calcium. Interacts with HIP1. Interacts with DENND1A, DENND1B and DENND1C. Interacts with OCRL. Interacts with ERBB2. Interacts with FKBP6. Interacts with CKAP5 and TACC3 forming the TACC3/ch-TOG/clathrin complex located at spindle inter-microtubules bridges; the complex implicates clathrin triskelions; TACC3 and CLTC are proposed to form a composite microtubule interaction surface. Interacts with ATG16L1 (via N-terminus). Interacts with RFTN1; the interaction occurs in response to pathogens. Interacts with USP2 isoform 2. Interacts with TMEM106B (via N-terminus). Interacts with DNAJC6; this interaction produces a local change in heavy-chain contacts, creating a detectable global distortion of the clathrin coat and leads to the recruitment of HSPA8.

The protein localises to the cytoplasmic vesicle membrane. Its subcellular location is the membrane. The protein resides in the coated pit. It is found in the melanosome. It localises to the cytoplasm. The protein localises to the cytoskeleton. Its subcellular location is the spindle. Clathrin is the major protein of the polyhedral coat of coated pits and vesicles. Two different adapter protein complexes link the clathrin lattice either to the plasma membrane or to the trans-Golgi network. Acts as a component of the TACC3/ch-TOG/clathrin complex proposed to contribute to stabilization of kinetochore fibers of the mitotic spindle by acting as inter-microtubule bridge. The TACC3/ch-TOG/clathrin complex is required for the maintenance of kinetochore fiber tension. Plays a role in early autophagosome formation. Interaction with DNAJC6 mediates the recruitment of HSPA8 to the clathrin lattice and creates local destabilization of the lattice promoting uncoating. The chain is Clathrin heavy chain 1 from Rattus norvegicus (Rat).